The sequence spans 426 residues: Kelch repeat-containing protein At3g27220 (426 aa).

A helical membrane pass occupies residues 18–38 (LMLVLYFTSVLGIGFIAAFLC). Kelch repeat units follow at residues 123-170 (LLYV…IVTD), 173-222 (YVYV…IWRG), 224-275 (LHVM…VAND), 276-338 (KLLV…WIIV), and 341-394 (SIVI…FWNG).

The protein localises to the membrane. This Arabidopsis thaliana (Mouse-ear cress) protein is Kelch repeat-containing protein At3g27220.